A 220-amino-acid polypeptide reads, in one-letter code: Metalloproteinase inhibitor 2 (220 aa).

A signal peptide spans 1–26 (MGAAARSLRLALGLLLLATLLRPADA). Cysteine 27 provides a ligand contact to Zn(2+). 2 involved in metalloproteinase-binding regions span residues 27–30 (CSCS) and 95–96 (SA). 6 disulfide bridges follow: cysteine 27–cysteine 98, cysteine 29–cysteine 127, cysteine 39–cysteine 152, cysteine 154–cysteine 201, cysteine 159–cysteine 164, and cysteine 172–cysteine 193. Residues 27–152 (CSCSPVHPQQ…SLNHRYQMGC (126 aa)) enclose the NTR domain.

The protein belongs to the protease inhibitor I35 (TIMP) family. In terms of assembly, interacts (via the C-terminal) with MMP2 (via the C-terminal PEX domain); the interaction inhibits the MMP2 activity. In terms of processing, the activity of TIMP2 is dependent on the presence of disulfide bonds.

It localises to the secreted. Its function is as follows. Complexes with metalloproteinases (such as collagenases) and irreversibly inactivates them by binding to their catalytic zinc cofactor. This is Metalloproteinase inhibitor 2 (Timp2) from Rattus norvegicus (Rat).